We begin with the raw amino-acid sequence, 299 residues long: Cytosolic sulfotransferase 1 (299 aa).

51-56 (KAGTTW) lines the 3'-phosphoadenylyl sulfate pocket. Residue His113 is the Proton acceptor of the active site. Residues Arg135, Ser143, Tyr199, 233-238 (VQFDAM), and 261-263 (RKG) each bind 3'-phosphoadenylyl sulfate.

This sequence belongs to the sulfotransferase 1 family. As to expression, expressed in liver.

The protein localises to the cytoplasm. Inhibited by Co(2+), Zn(2+), Cd(2+) and Pb(2+) ions. Inactivated by Hg(2+) and Cu(2+) ions. Functionally, sulfotransferase that utilizes 3'-phospho-5'-adenylyl sulfate (PAPS) as sulfonate donor to catalyze the sulfate conjugation of a variety of xenobiotic and endogenous compounds, including 2-naphthol, hydroxychlorobiphenyls, dopamine and T3 (triiodo-L-thyronine). The polypeptide is Cytosolic sulfotransferase 1 (Danio rerio (Zebrafish)).